We begin with the raw amino-acid sequence, 235 residues long: Urease accessory protein UreF (235 aa).

Belongs to the UreF family. As to quaternary structure, ureD, UreF and UreG form a complex that acts as a GTP-hydrolysis-dependent molecular chaperone, activating the urease apoprotein by helping to assemble the nickel containing metallocenter of UreC. The UreE protein probably delivers the nickel.

The protein resides in the cytoplasm. Required for maturation of urease via the functional incorporation of the urease nickel metallocenter. The polypeptide is Urease accessory protein UreF (Haemophilus influenzae (strain PittGG)).